The chain runs to 81 residues: Large ribosomal subunit protein uL23 (81 aa).

The protein belongs to the universal ribosomal protein uL23 family. As to quaternary structure, part of the 50S ribosomal subunit. Contacts protein L29.

Binds to 23S rRNA. One of the proteins that surrounds the polypeptide exit tunnel on the outside of the ribosome. This Saccharolobus solfataricus (strain ATCC 35092 / DSM 1617 / JCM 11322 / P2) (Sulfolobus solfataricus) protein is Large ribosomal subunit protein uL23.